The following is a 255-amino-acid chain: Cullin-like protein 3 (255 aa).

Belongs to the cullin family.

The polypeptide is Cullin-like protein 3 (Arabidopsis thaliana (Mouse-ear cress)).